Here is an 858-residue protein sequence, read N- to C-terminus: DNA mismatch repair protein MutS (858 aa).

602-609 (GPNMSGKS) serves as a coordination point for ATP.

This sequence belongs to the DNA mismatch repair MutS family.

This protein is involved in the repair of mismatches in DNA. It is possible that it carries out the mismatch recognition step. This protein has a weak ATPase activity. Overexpression of mutSL partially suppresses the high spontaneous mutation frequency of a ytkD/mutM/mutY triple disruption which lacks the system required to prevent damage by oxidized guanine (8-oxo-dGTP). This suggests that MutSL also functions to repair mismatches due to oxidative stress in both growing and stationary phase cells. The protein is DNA mismatch repair protein MutS of Bacillus subtilis (strain 168).